The following is a 172-amino-acid chain: uncharacterized protein (172 aa).

The next 3 membrane-spanning stretches (helical) occupy residues isoleucine 7–isoleucine 27, leucine 59–phenylalanine 79, and phenylalanine 89–lysine 109.

This sequence to M.jannaschii MJ0695.

The protein localises to the cell membrane. This is an uncharacterized protein from Methanocaldococcus jannaschii (strain ATCC 43067 / DSM 2661 / JAL-1 / JCM 10045 / NBRC 100440) (Methanococcus jannaschii).